We begin with the raw amino-acid sequence, 1308 residues long: Limbin (1308 aa).

An N-terminal signal peptide occupies residues 1–26 (MDPSGSRGRPTWVLAGGLLAVALALG). The Extracellular segment spans residues 27 to 300 (GRGCLGASSR…VLPHHGLHAA (274 aa)). The segment at 36 to 76 (RPRWRPLGAQPPRDPQVAPRSGPGLRIPPGRSGAGPESSTQ) is disordered. An N-linked (GlcNAc...) asparagine glycan is attached at Asn-220. Residues 301-321 (GFFIAFLLSLVLTWAALFLMV) form a helical membrane-spanning segment. Residues 322–1308 (RYQCLKGNML…KKAMRALGMD (987 aa)) lie on the Cytoplasmic side of the membrane. Coiled coils occupy residues 455 to 578 (TAEC…ELMD), 636 to 800 (DQME…DRDQ), and 1001 to 1113 (ASEM…EADT). The span at 784–801 (MAARAEQLEGEERDRDQE) shows a compositional bias: basic and acidic residues. The disordered stretch occupies residues 784-816 (MAARAEQLEGEERDRDQEGVQSVRQRLKDDAPE).

As to quaternary structure, component of the EvC complex composed of EFCAB7, IQCE, EVC2 and EVC; built from two subcomplexes, EVC2:EVC and EFCAB7:IQCE. Interacts with EVC. Interacts (via N-terminal end) with EFCAB7. Interacts (via N-terminal end) with IQCE. In terms of tissue distribution, found in the heart, placenta, lung, liver, skeletal muscle, kidney and pancreas.

The protein resides in the cell membrane. It is found in the cytoplasm. The protein localises to the cytoskeleton. It localises to the cilium basal body. Its subcellular location is the cell projection. The protein resides in the cilium. It is found in the cilium membrane. The protein localises to the nucleus. Functionally, component of the EvC complex that positively regulates ciliary Hedgehog (Hh) signaling. Plays a critical role in bone formation and skeletal development. May be involved in early embryonic morphogenesis. The chain is Limbin (EVC2) from Homo sapiens (Human).